We begin with the raw amino-acid sequence, 252 residues long: Phosphoglycolate phosphatase (252 aa).

The active-site Nucleophile is the aspartate 13. Residues aspartate 13, aspartate 15, and aspartate 192 each coordinate Mg(2+).

Belongs to the HAD-like hydrolase superfamily. CbbY/CbbZ/Gph/YieH family. In terms of assembly, monomer. It depends on Mg(2+) as a cofactor. Chloride serves as cofactor.

The enzyme catalyses 2-phosphoglycolate + H2O = glycolate + phosphate. It participates in organic acid metabolism; glycolate biosynthesis; glycolate from 2-phosphoglycolate: step 1/1. In terms of biological role, specifically catalyzes the dephosphorylation of 2-phosphoglycolate. Is involved in the dissimilation of the intracellular 2-phosphoglycolate formed during the DNA repair of 3'-phosphoglycolate ends, a major class of DNA lesions induced by oxidative stress. The sequence is that of Phosphoglycolate phosphatase from Shigella sonnei (strain Ss046).